A 156-amino-acid polypeptide reads, in one-letter code: Ribosome maturation factor RimP (156 aa).

This sequence belongs to the RimP family.

The protein resides in the cytoplasm. Its function is as follows. Required for maturation of 30S ribosomal subunits. This is Ribosome maturation factor RimP from Prochlorococcus marinus (strain NATL2A).